The primary structure comprises 158 residues: Transcription elongation factor GreA (158 aa).

The protein belongs to the GreA/GreB family.

Necessary for efficient RNA polymerase transcription elongation past template-encoded arresting sites. The arresting sites in DNA have the property of trapping a certain fraction of elongating RNA polymerases that pass through, resulting in locked ternary complexes. Cleavage of the nascent transcript by cleavage factors such as GreA or GreB allows the resumption of elongation from the new 3'terminus. GreA releases sequences of 2 to 3 nucleotides. The protein is Transcription elongation factor GreA of Sinorhizobium medicae (strain WSM419) (Ensifer medicae).